We begin with the raw amino-acid sequence, 520 residues long: Nonsense-mediated mRNA decay factor SMG9 (520 aa).

Residues 1–143 (MSESGHSQPG…KGEKEGQRPT (143 aa)) are disordered. Ser2 is modified (N-acetylserine). A phosphoserine mark is found at Ser2, Ser4, Ser7, Ser32, and Ser53. Basic and acidic residues predominate over residues 36-53 (GRERDYIAPWERERRDGS). Composition is skewed to pro residues over residues 78–94 (QPPP…PAPL) and 122–133 (TAPPPPTAPAPP). Ser451 is subject to Phosphoserine.

This sequence belongs to the SMG9 family. Self-associates to form homodimers and forms heterodimers with SMG8; these assembly forms may represent SMG1C intermediate forms. Component of the SMG1C complex composed of SMG1, SMG8 and SMG9. Interacts with DHX34; the interaction is RNA-independent. Phosphorylated by SMG1.

Involved in nonsense-mediated decay (NMD) of mRNAs containing premature stop codons. Is recruited by release factors to stalled ribosomes together with SMG1 and SMG8 (forming the SMG1C protein kinase complex) and, in the SMG1C complex, is required for the efficient association between SMG1 and SMG8. Plays a role in brain, heart, and eye development. In Mus musculus (Mouse), this protein is Nonsense-mediated mRNA decay factor SMG9.